The following is a 554-amino-acid chain: uncharacterized protein (554 aa).

Ca(2+) is bound by residues Asp-327 and Asn-328.

The protein belongs to the sulfatase family. Requires Ca(2+) as cofactor.

It is found in the cytoplasm. The protein localises to the nucleus. This is an uncharacterized protein from Schizosaccharomyces pombe (strain 972 / ATCC 24843) (Fission yeast).